Consider the following 100-residue polypeptide: Large ribosomal subunit protein uL23 (100 aa).

It belongs to the universal ribosomal protein uL23 family. In terms of assembly, part of the 50S ribosomal subunit. Contacts protein L29, and trigger factor when it is bound to the ribosome.

Functionally, one of the early assembly proteins it binds 23S rRNA. One of the proteins that surrounds the polypeptide exit tunnel on the outside of the ribosome. Forms the main docking site for trigger factor binding to the ribosome. The polypeptide is Large ribosomal subunit protein uL23 (Shigella dysenteriae serotype 1 (strain Sd197)).